We begin with the raw amino-acid sequence, 413 residues long: MGKGRVIFHVDMNSFYASVEMAYDPSLKGKAIAVAGSVKDRRGIVVTSSYEARAKGVRSPIPVWQALRKCPELILIPPNFDRYRSASQKIFSLLEEYTPLVEKVSIDEGYMDVTTTIKKVHPLELAKEIQQRILAEMDLPCSIGIAPNKFLAKMASDMKKPLGITVLRKRDIAEKLWSLPIEEMYGIGRRSVDTYKKYQLHTIGDLAKADPAWLEKKFGINGPRLHCRANGIDERPVDPEAVFHFKSVGNSTTLPEDTTNEGRLTDVLHQLSHSVHVRMKRKHVFCYGVQLTIRYDDRKTITRSRKLEHPIQEKDDIFTVALSLWKQAWNGRPIRLLGVTGYDVIDKKYAYEPLDLFRYEEQIKQATLAETISSIHKRYGKPIVAKGKDLDLFKEVDETKKGTSFDRDFFQHD.

The UmuC domain occupies isoleucine 7 to glycine 188. Mg(2+) is bound by residues aspartate 11 and aspartate 107. Residue glutamate 108 is part of the active site.

It belongs to the DNA polymerase type-Y family. In terms of assembly, monomer. Requires Mg(2+) as cofactor.

Its subcellular location is the cytoplasm. The enzyme catalyses DNA(n) + a 2'-deoxyribonucleoside 5'-triphosphate = DNA(n+1) + diphosphate. Its function is as follows. Poorly processive, error-prone DNA polymerase involved in untargeted mutagenesis. Copies undamaged DNA at stalled replication forks, which arise in vivo from mismatched or misaligned primer ends. These misaligned primers can be extended by PolIV. Exhibits no 3'-5' exonuclease (proofreading) activity. May be involved in translesional synthesis, in conjunction with the beta clamp from PolIII. The sequence is that of DNA polymerase IV 1 (dinB1) from Halalkalibacterium halodurans (strain ATCC BAA-125 / DSM 18197 / FERM 7344 / JCM 9153 / C-125) (Bacillus halodurans).